A 488-amino-acid polypeptide reads, in one-letter code: NADH-ubiquinone oxidoreductase chain 4 (488 aa).

Transmembrane regions (helical) follow at residues 1-21, 34-54, 79-99, 110-130, 134-154, 164-184, 207-227, 238-258, 272-292, 301-321, 328-348, 367-387, 407-427, and 452-472; these read MFLL…IEGN, SIAL…FILF, VDGL…IAIL, VLSF…VFLV, LLFY…IGLF, FYLF…IVAM, LFLF…SFLN, PLSG…YGIF, YTYI…FSTL, IAYS…SNTI, IALG…AGGI, VMPI…GTPL, LLGV…IFMY, and FIML…PAPI.

This sequence belongs to the complex I subunit 4 family.

Its subcellular location is the mitochondrion membrane. The catalysed reaction is a ubiquinone + NADH + 5 H(+)(in) = a ubiquinol + NAD(+) + 4 H(+)(out). Its function is as follows. Core subunit of the mitochondrial membrane respiratory chain NADH dehydrogenase (Complex I) that is believed to belong to the minimal assembly required for catalysis. Complex I functions in the transfer of electrons from NADH to the respiratory chain. The immediate electron acceptor for the enzyme is believed to be ubiquinone. The chain is NADH-ubiquinone oxidoreductase chain 4 (ND4) from Aspergillus amstelodami.